The following is a 600-amino-acid chain: UvrABC system protein C (600 aa).

A GIY-YIG domain is found at 15–92; the sequence is DKPGCYLMKD…IKKYQPYYNV (78 aa). Residues 197–232 form the UVR domain; that stretch reads SQVKQDLTEKMTQASMNLEFERAAEFRDQLKYIEQT.

It belongs to the UvrC family. As to quaternary structure, interacts with UvrB in an incision complex.

Its subcellular location is the cytoplasm. Its function is as follows. The UvrABC repair system catalyzes the recognition and processing of DNA lesions. UvrC both incises the 5' and 3' sides of the lesion. The N-terminal half is responsible for the 3' incision and the C-terminal half is responsible for the 5' incision. The sequence is that of UvrABC system protein C from Lactobacillus gasseri (strain ATCC 33323 / DSM 20243 / BCRC 14619 / CIP 102991 / JCM 1131 / KCTC 3163 / NCIMB 11718 / NCTC 13722 / AM63).